The chain runs to 416 residues: Diaminopimelate decarboxylase (416 aa).

Residue K60 is modified to N6-(pyridoxal phosphate)lysine. Pyridoxal 5'-phosphate is bound by residues G240 and E274–R277. The substrate site is built by R277, R313, and Y317. The active-site Proton donor is C343. Positions 344 and 371 each coordinate substrate. Y371 serves as a coordination point for pyridoxal 5'-phosphate.

The protein belongs to the Orn/Lys/Arg decarboxylase class-II family. LysA subfamily. As to quaternary structure, homodimer. Requires pyridoxal 5'-phosphate as cofactor.

The catalysed reaction is meso-2,6-diaminopimelate + H(+) = L-lysine + CO2. Its pathway is amino-acid biosynthesis; L-lysine biosynthesis via DAP pathway; L-lysine from DL-2,6-diaminopimelate: step 1/1. Its function is as follows. Specifically catalyzes the decarboxylation of meso-diaminopimelate (meso-DAP) to L-lysine. In Pseudomonas fluorescens, this protein is Diaminopimelate decarboxylase.